Consider the following 268-residue polypeptide: Homeobox protein Hox-C4a (268 aa).

The segment at 70–129 (PEPDTQRGHGLPHAGHLLGKGQSASCEPPPLPLSPATPSAASSACNQATPEHPNSSASAK) is disordered. 2 stretches are compositionally biased toward low complexity: residues 77 to 95 (GHGL…SASC) and 105 to 114 (ATPSAASSAC). Residues 115-128 (NQATPEHPNSSASA) show a composition bias toward polar residues. The Antp-type hexapeptide signature appears at 133–138 (VYPWMK). Residues 154–213 (PKRSRTAYTRQQVLELEKEFHYNRYLTRRRRIEIAHSLVLSERQIKIWFQNRRMKWKKDH) constitute a DNA-binding region (homeobox). The interval 212–268 (DHRLPNTKVRSSSSTGISSGSNTSSAAGVVAAASTTNTMSASEDLSGTERGEDITRL) is disordered. The segment covering 222–253 (SSSSTGISSGSNTSSAAGVVAAASTTNTMSAS) has biased composition (low complexity). The span at 258 to 268 (GTERGEDITRL) shows a compositional bias: basic and acidic residues.

This sequence belongs to the Antp homeobox family. Deformed subfamily.

The protein localises to the nucleus. In terms of biological role, sequence-specific transcription factor which is part of a developmental regulatory system that provides cells with specific positional identities on the anterior-posterior axis. This Danio rerio (Zebrafish) protein is Homeobox protein Hox-C4a (hoxc4a).